Consider the following 140-residue polypeptide: Beta/delta-urticatoxin-De2a (140 aa).

Residues 1-18 (MKTSTALVLLLALTATSA) form the signal peptide. Residues 19 to 78 (SSGDHQFIDEQNIMNVAEGKNVISSLSSSGGGDDAAAIMESVLVNGGNRKMVFMMVSGSQ) constitute a propeptide that is removed on maturation. 6 disulfides stabilise this stretch: C81-C95, C88-C100, C94-C108, C113-C127, C120-C131, and C126-C139.

It belongs to the urticatoxin-2 family. As to expression, expressed in trichomes, that are stiff epidermal hairs located on the surface of petioles and leaves.

It is found in the secreted. Its function is as follows. Plant defense neurotoxin that causes pain and systemic symptoms in mammals via modulation of voltage-gated sodium channels (Nav). Potent modulator of human Nav1.5/SCN5A (EC(50)=55 nM), Nav1.6/SCN8A (EC(50)=0.86 nM), and Nav1.7/SCN9A (EC(50)=208 nM), where it shifts the activation threshold to more negative potentials and delays fast inactivation. Also shifts the voltage-dependence of steady-state fast inactivation of Nav1.6/SCN8A, but not that of Nav1.5/SCN5A or Nav1.7/SCN9A. On Nav1.7/SCN9A, principally acts by binding to extracellular loops of domain IV (Nav site 3). In vivo, intraplantar injection into mice causes numerous dose-dependent, immediate, and long-lasting spontaneous pain behaviors, while no swelling is observed in the injected paw. At the highest doses tested, systemic symptoms including hypokinesia and hypersalivation are observed. This chain is Beta/delta-urticatoxin-De2a, found in Dendrocnide excelsa (Giant stinging tree).